The chain runs to 107 residues: MRLQWPKFITFLSTGSCCLLFLLLPCSFFPLPTAMHSGKCTACVSVAGIPQLRVTISNSTSRTTFMFAVTTKGKTSIKASNVIRARELYLAYVLYITQARANTWLVV.

The first 34 residues, 1–34 (MRLQWPKFITFLSTGSCCLLFLLLPCSFFPLPTA), serve as a signal peptide directing secretion.

This is an uncharacterized protein from Saccharomyces cerevisiae (strain ATCC 204508 / S288c) (Baker's yeast).